A 268-amino-acid polypeptide reads, in one-letter code: Hydroxypyruvate/pyruvate aldolase (268 aa).

Residue His-48 is the Proton acceptor of the active site. Residues Glu-152 and Asp-178 each coordinate a divalent metal cation.

Belongs to the HpcH/HpaI aldolase family. It depends on Mn(2+) as a cofactor. The cofactor is Mg(2+). Co(2+) serves as cofactor.

It carries out the reaction D-glyceraldehyde + 3-hydroxypyruvate = (3R,4S,5R)-3,4,5,6-tetrahydroxy-2-oxohexanoate. The enzyme catalyses D-glyceraldehyde + 3-hydroxypyruvate = 2-dehydro-D-gluconate. The catalysed reaction is D-glyceraldehyde + 3-hydroxypyruvate = 2-dehydro-D-galactonate. It catalyses the reaction D-glyceraldehyde + pyruvate = 2-dehydro-3-deoxy-L-galactonate. It carries out the reaction 2-dehydro-3-deoxy-D-gluconate = D-glyceraldehyde + pyruvate. Its function is as follows. Aldolase which can catalyze in vitro the aldolisation reaction between hydroxypyruvate (HPA) or pyruvate (PA) and D-glyceraldehyde (D-GA). The condensation of hydroxypyruvate and D-glyceraldehyde produces (3R,4S,5R)-3,4,5,6-tetrahydroxy-2-oxohexanoate as the major product, 2-dehydro-D-gluconate and 2-dehydro-D-galactonate. The condensation of pyruvate and D-glyceraldehyde produces 2-dehydro-3-deoxy-L-galactonate as the major product and 2-dehydro-3-deoxy-D-gluconate. Also catalyzes the retro-aldol type decarboxylation of oxaloacetate, a general property of known pyruvate aldolases. The protein is Hydroxypyruvate/pyruvate aldolase of Pseudomonas aeruginosa.